We begin with the raw amino-acid sequence, 77 residues long: Acyl carrier protein (77 aa).

The region spanning 2 to 77 is the Carrier domain; sequence ASIEKRIKEI…DAIDYITDHT (76 aa). S37 carries the O-(pantetheine 4'-phosphoryl)serine modification.

This sequence belongs to the acyl carrier protein (ACP) family. In terms of processing, 4'-phosphopantetheine is transferred from CoA to a specific serine of apo-ACP by AcpS. This modification is essential for activity because fatty acids are bound in thioester linkage to the sulfhydryl of the prosthetic group.

It is found in the cytoplasm. Its pathway is lipid metabolism; fatty acid biosynthesis. In terms of biological role, carrier of the growing fatty acid chain in fatty acid biosynthesis. This chain is Acyl carrier protein, found in Geobacter sp. (strain M21).